We begin with the raw amino-acid sequence, 174 residues long: MTTIVSVRREGKVVVAGDGQASQGDMIAKGNVKKVRRLYNDSVLVGFAGSTADAFILFDLCERKLEMHQGNLTKAAVELAKEWRSDRALRRLEAMLIVADKTTSLIISGTGDLINADNDLLTIGSGGYFARSAATALLENTDLDAREIATKALTIAGDIDVYTNHNHTVEELNA.

Thr-2 is a catalytic residue. Na(+)-binding residues include Gly-157, Asp-160, and Thr-163.

This sequence belongs to the peptidase T1B family. HslV subfamily. In terms of assembly, a double ring-shaped homohexamer of HslV is capped on each side by a ring-shaped HslU homohexamer. The assembly of the HslU/HslV complex is dependent on binding of ATP.

It localises to the cytoplasm. It carries out the reaction ATP-dependent cleavage of peptide bonds with broad specificity.. Its activity is regulated as follows. Allosterically activated by HslU binding. In terms of biological role, protease subunit of a proteasome-like degradation complex believed to be a general protein degrading machinery. This chain is ATP-dependent protease subunit HslV, found in Aliivibrio fischeri (strain MJ11) (Vibrio fischeri).